We begin with the raw amino-acid sequence, 566 residues long: Serine/threonine-protein kinase PknE (566 aa).

At 1-337 (MDGTAESREG…PLPRSARQPW (337 aa)) the chain is on the cytoplasmic side. Phosphoserine; by autocatalysis is present on Ser7. Thr11 is modified (phosphothreonine; by autocatalysis). The Protein kinase domain maps to 16 to 275 (YRLRRLVGRG…DLSAAAHAAL (260 aa)). ATP contacts are provided by residues 22 to 30 (VGRGGMGDV) and Lys45. Thr50 and Thr59 each carry phosphothreonine; by autocatalysis. Asp139 serves as the catalytic Proton acceptor. Residues Thr170, Thr175, and Thr178 each carry the phosphothreonine; by autocatalysis modification. A disordered region spans residues 296–330 (PVPSTHPVSPGTRWPQPTPWAGGAPPWGPPSSPLP). Residues 338-358 (LWVGVAVAVVVALAGGLGIAL) form a helical membrane-spanning segment. Over 359–566 (AHPWRSSGPR…DPSWLARLIG (208 aa)) the chain is Extracellular.

This sequence belongs to the protein kinase superfamily. Ser/Thr protein kinase family. Post-translationally, autophosphorylated on serine and threonine residues. Dephosphorylated by PstP.

It is found in the cell membrane. The catalysed reaction is L-seryl-[protein] + ATP = O-phospho-L-seryl-[protein] + ADP + H(+). The enzyme catalyses L-threonyl-[protein] + ATP = O-phospho-L-threonyl-[protein] + ADP + H(+). The protein is Serine/threonine-protein kinase PknE (pknE) of Mycobacterium bovis (strain ATCC BAA-935 / AF2122/97).